A 1202-amino-acid chain; its full sequence is MEDSNSTASNVARAILAVVDFSSTSDTRKSAVQFLDSVKSGDVRVLAKTSFHLVKKEWSSEIRLHAFKMLQHLVRLRWDELSPPECRGLVNLSIELMSEVANASENWPLKSQSAALVAEIVRREGPDRWQEIFTLLTSLSAQGPLQAELVLMTLRWLPEDITIYNDDLEGDRRRLLLRGLTQSLPEILPLLYNLLERHFGAAMSEAGMQHFDLAKQHADVVIACLNAIVAYTEWAPVPDLARYGILSGCSFLLSSSDFRLHACEVFKLVCSRKRPSDASTAEFDSAISNLFQILTNASREFLCRSSSSSSVIDDNDYDFAVCMCESMASLGSTNLQSISSDGGVMAVYLQQMLGFFQHFKLGLHFEALLFWLSLMRDLLPKPKAATYPSGGGSSTGGDDSSSQVDSEKKKTLSLINDDISSAILDVSFQRMLKKEKVPTGIALSLGPLELWSDEFEGKGDFGPYRSKLLELIKLTASHKPLISSTKISERVITLIKHLLASPAPLQHVAVMDSQQLALDCIVATLFDGSNEFAGGSSEVHYALRGIFEGLLQQLLSLKWNEPELMKVHVHYLDAMGPFLKYFPDAVGSLINKLFELLTSLPHVVKDPATSTSRAARLQICTSFIRIAKAAEKSVLPHMKGIADTMGYLAKEGTLLRGEHNILGEAFLVMASSAGAQQQQEVLAWLLEPLSQQWIQPEWQNNYLSDPMGLVRLCSNTSFMWSIYHTVTFFEKALKRSGYRKSNLNTTSATTPASHPMAHHLSWMLPPLLKLLRVLHSLWSPSVFQTLPPEMRAAMTMTDAERYSLLGEANPKLSKGVSVYADGSFEGTKEGQAEASESDIRNWLKGIRDCGYNVLGLSTTIGETFFKCLDANYVAMALMENLQSMEFRHIRLFIHTFITYIVKSCPADMWESWLGVLLHPLFIHCQQALSSAWPGLLQEGRAKVPDLFGIQSGSDMKLEVMEEKLLRDLTREIATLFSTMASPGLNTGVPVLEHSGHVGRVDMSTLTDLHAFRSNSMVGFLLNHKSVALPALQICLETFTWTDGEATTKVCYFCGVVVLLAKLTNNVELREFVSKDMFSAVIRGLGMESNAINSPDLVNICREIFIYLSDRDPAPRQVLLSLPCLTPNDLHAFEEATAKTSSPKEQKQLMRSLLLLGTGNNLKALAAQKSQNVITNVTARTRLPASAPETIGAGVLWDEEFVQ.

N-acetylmethionine is present on M1.

This sequence belongs to the exportin family. Interacts with RAN1. In terms of tissue distribution, expressed in roots, leaves and floral buds.

The protein resides in the nucleus. Functionally, nucleocytoplasmic transporter involved in the nuclear export of microRNAs (miRNAs). Required for several miRNAs accumulation. Specifically required for miR156 accumulation which targets SPL3, SPL4 and SPL5 transcription factors. Involved in plant development through its role in miRNAs processing. Required for vegetative phase change and vegetative to reproductive phase transition. Functionally dependent on RAN1 binding. Does not seem to be involved in small interfering RNAs (siRNAs) processing. The protein is Protein HASTY 1 (HST1) of Arabidopsis thaliana (Mouse-ear cress).